Reading from the N-terminus, the 821-residue chain is Lon protease (821 aa).

Residues 18 to 216 (LPLMSLREVV…KVYELLQGEI (199 aa)) form the Lon N-terminal domain. 368–375 (GPPGVGKT) lines the ATP pocket. Positions 606 to 787 (TSQVGVCTGL…DEVLPQALMA (182 aa)) constitute a Lon proteolytic domain. Active-site residues include Ser693 and Lys736.

The protein belongs to the peptidase S16 family. As to quaternary structure, homohexamer. Organized in a ring with a central cavity.

The protein localises to the cytoplasm. It carries out the reaction Hydrolysis of proteins in presence of ATP.. In terms of biological role, ATP-dependent serine protease that mediates the selective degradation of mutant and abnormal proteins as well as certain short-lived regulatory proteins. Required for cellular homeostasis and for survival from DNA damage and developmental changes induced by stress. Degrades polypeptides processively to yield small peptide fragments that are 5 to 10 amino acids long. Binds to DNA in a double-stranded, site-specific manner. In Nitratidesulfovibrio vulgaris (strain ATCC 29579 / DSM 644 / CCUG 34227 / NCIMB 8303 / VKM B-1760 / Hildenborough) (Desulfovibrio vulgaris), this protein is Lon protease.